We begin with the raw amino-acid sequence, 104 residues long: L-rhamnose mutarotase (104 aa).

Y18 lines the substrate pocket. The Proton donor role is filled by H22. Residues Y41 and W76–W77 contribute to the substrate site.

The protein belongs to the rhamnose mutarotase family. In terms of assembly, homodimer.

The protein resides in the cytoplasm. It catalyses the reaction alpha-L-rhamnose = beta-L-rhamnose. It functions in the pathway carbohydrate metabolism; L-rhamnose metabolism. Functionally, involved in the anomeric conversion of L-rhamnose. This Tolumonas auensis (strain DSM 9187 / NBRC 110442 / TA 4) protein is L-rhamnose mutarotase.